The sequence spans 317 residues: Apolipoprotein E (317 aa).

The N-terminal stretch at 1–18 is a signal peptide; it reads MKALWVALVVTLLAGCRA. Tandem repeats lie at residues 79–100, 101–122, 123–144, 145–166, 167–188, 189–210, 211–232, and 233–254. The interval 79 to 254 is 8 X 22 AA approximate tandem repeats; it reads ALMEETMKEV…RLDKMREQLE (176 aa). Met-142 is subject to Methionine sulfoxide. Positions 157–167 are LDL and other lipoprotein receptors binding; that stretch reads HLRKLRKRLLR. Residue 161–164 participates in heparin binding; it reads LRKR. Positions 209–289 are lipid-binding and lipoprotein association; that stretch reads TATTSTLGSQ…GWFQPLVEDL (81 aa). Thr-211 is a glycosylation site (O-linked (GalNAc...) threonine). Residue 228 to 235 coordinates heparin; that stretch reads GQKLRGRL. The homooligomerization stretch occupies residues 265-317; sequence SQMRLQAETFQARLKGWFQPLVEDLQRQWAGLVEKVQQLAVGTTPTPAASKNQ. Residues 277–289 are specificity for association with VLDL; sequence RLKGWFQPLVEDL. An O-linked (GalNAc...) threonine glycan is attached at Thr-310.

Belongs to the apolipoprotein A1/A4/E family. In terms of assembly, homotetramer. May interact with ABCA1; functionally associated with ABCA1 in the biogenesis of HDLs. May interact with APP/A4 amyloid-beta peptide; the interaction is extremely stable in vitro but its physiological significance is unclear. May interact with MAPT. May interact with MAP2. In the cerebrospinal fluid, interacts with secreted SORL1. Interacts with PMEL; this allows the loading of PMEL luminal fragment on ILVs to induce fibril nucleation. In terms of processing, APOE exists as multiple glycosylated and sialylated glycoforms within cells and in plasma. The extent of glycosylation and sialylation are tissue and context specific. Post-translationally, glycated in plasma VLDL. Phosphorylated by FAM20C in the extracellular medium.

It is found in the secreted. It localises to the extracellular space. The protein resides in the extracellular matrix. The protein localises to the extracellular vesicle. Its subcellular location is the endosome. It is found in the multivesicular body. APOE is an apolipoprotein, a protein associating with lipid particles, that mainly functions in lipoprotein-mediated lipid transport between organs via the plasma and interstitial fluids. APOE is a core component of plasma lipoproteins and is involved in their production, conversion and clearance. Apolipoproteins are amphipathic molecules that interact both with lipids of the lipoprotein particle core and the aqueous environment of the plasma. As such, APOE associates with chylomicrons, chylomicron remnants, very low density lipoproteins (VLDL) and intermediate density lipoproteins (IDL) but shows a preferential binding to high-density lipoproteins (HDL). It also binds a wide range of cellular receptors including the LDL receptor/LDLR and the very low-density lipoprotein receptor/VLDLR that mediate the cellular uptake of the APOE-containing lipoprotein particles. Finally, APOE also has a heparin-binding activity and binds heparan-sulfate proteoglycans on the surface of cells, a property that supports the capture and the receptor-mediated uptake of APOE-containing lipoproteins by cells. The chain is Apolipoprotein E (APOE) from Camelus dromedarius (Dromedary).